Here is a 550-residue protein sequence, read N- to C-terminus: Amino acid transporter AVT1C (550 aa).

The segment covering 1 to 11 has biased composition (polar residues); sequence MNHVPSDQSFY. Disordered regions lie at residues 1 to 44 and 128 to 148; these read MNHV…ENQA and QGLL…EKSS. A compositionally biased stretch (basic and acidic residues) spans 20 to 34; the sequence is RKDYVEEDGGSHSDS. 11 consecutive transmembrane segments (helical) span residues 165-185, 190-210, 237-257, 283-303, 307-327, 342-362, 377-397, 422-442, 462-484, 488-510, and 521-541; these read AVLN…PYAA, WLGL…GILL, IFVS…YIIL, LFAL…DLSV, ISAG…WIGL, LSTL…HAVF, AVLL…AVMG, IAVW…ISPV, IGIR…FFGL, LIGS…LSIV, and LCVL…YSAL.

Belongs to the amino acid/polyamine transporter 2 family. Amino acid/auxin permease (AAAP) (TC 2.A.18.5) subfamily.

The protein resides in the membrane. The sequence is that of Amino acid transporter AVT1C from Arabidopsis thaliana (Mouse-ear cress).